We begin with the raw amino-acid sequence, 189 residues long: Peptidyl-tRNA hydrolase (189 aa).

TRNA is bound at residue Tyr14. Catalysis depends on His19, which acts as the Proton acceptor. Residues Tyr64, Asn66, and Asn112 each coordinate tRNA.

It belongs to the PTH family. As to quaternary structure, monomer.

It is found in the cytoplasm. The enzyme catalyses an N-acyl-L-alpha-aminoacyl-tRNA + H2O = an N-acyl-L-amino acid + a tRNA + H(+). Hydrolyzes ribosome-free peptidyl-tRNAs (with 1 or more amino acids incorporated), which drop off the ribosome during protein synthesis, or as a result of ribosome stalling. Its function is as follows. Catalyzes the release of premature peptidyl moieties from peptidyl-tRNA molecules trapped in stalled 50S ribosomal subunits, and thus maintains levels of free tRNAs and 50S ribosomes. This is Peptidyl-tRNA hydrolase from Brevibacillus brevis (strain 47 / JCM 6285 / NBRC 100599).